The sequence spans 271 residues: 1,4-dihydroxy-2-naphthoyl-CoA synthase (271 aa).

Residues 71-75 (SGGDQ), Y83, 115-119 (YAIGG), T141, S147, Y244, and K259 each bind substrate. A hydrogencarbonate-binding site is contributed by 140–142 (QTG). Over residues 250-263 (KEGRDSFKEKRKPD) the composition is skewed to basic and acidic residues. The tract at residues 250–271 (KEGRDSFKEKRKPDFGQFPRFP) is disordered.

Belongs to the enoyl-CoA hydratase/isomerase family. MenB subfamily. Hydrogencarbonate serves as cofactor.

The enzyme catalyses 2-succinylbenzoyl-CoA + H(+) = 1,4-dihydroxy-2-naphthoyl-CoA + H2O. It participates in quinol/quinone metabolism; 1,4-dihydroxy-2-naphthoate biosynthesis; 1,4-dihydroxy-2-naphthoate from chorismate: step 6/7. Its pathway is quinol/quinone metabolism; menaquinone biosynthesis. Its function is as follows. Converts o-succinylbenzoyl-CoA (OSB-CoA) to 1,4-dihydroxy-2-naphthoyl-CoA (DHNA-CoA). The polypeptide is 1,4-dihydroxy-2-naphthoyl-CoA synthase (Bacillus subtilis (strain 168)).